Consider the following 361-residue polypeptide: MKVQRIEVENKPYPLYLLLDKEYQLIEPVMKFIKYLDNTGKSPNTIKAYCYHLKLLYEFMEQRGVILNDINFELLADFVGWLRYPSASNVIDLQSKKAIREETTVNTILNVVMSFLDYLSRLGEFKSIDVFKQAKGRNFKGFLHHVNKGRYQKNVLKLRVKKKQIRTLRSKEVKQIIDACHTKRDKLILMLMYEGGLRIGEVLSLRLEDIVTWDNQIHLTPRDVNVNEAYIKLRKERTIHVSKELMSLYTDYLIYEYSEELEHDYVFISLKEGYFGKPLKYQSVLDLVRRIVKRTGIEFTSHMLRHTHATQLIREGWDVAFVQKRLGHAHVQTTLNTYVHLSDQDMKNEFNKYLERKEHKK.

The 98-residue stretch at 23 to 120 (YQLIEPVMKF…VVMSFLDYLS (98 aa)) folds into the Core-binding (CB) domain. In terms of domain architecture, Tyr recombinase spans 163–351 (KQIRTLRSKE…SDQDMKNEFN (189 aa)). Active-site residues include Arg198, Lys232, His302, Arg305, and His328. The active-site O-(3'-phospho-DNA)-tyrosine intermediate is Tyr338.

The protein belongs to the 'phage' integrase family.

Its function is as follows. One of three proteins encoded by transposon Tn554 required for its transposition. This chain is Transposase A from transposon Tn554 (tnpA1), found in Staphylococcus aureus (strain Mu50 / ATCC 700699).